Consider the following 504-residue polypeptide: Glucose-6-phosphate isomerase (504 aa).

Catalysis depends on E333, which acts as the Proton donor. Catalysis depends on residues H364 and K473.

This sequence belongs to the GPI family.

The protein resides in the cytoplasm. The enzyme catalyses alpha-D-glucose 6-phosphate = beta-D-fructose 6-phosphate. It participates in carbohydrate biosynthesis; gluconeogenesis. It functions in the pathway carbohydrate degradation; glycolysis; D-glyceraldehyde 3-phosphate and glycerone phosphate from D-glucose: step 2/4. Catalyzes the reversible isomerization of glucose-6-phosphate to fructose-6-phosphate. The chain is Glucose-6-phosphate isomerase from Xanthomonas campestris pv. campestris (strain B100).